The sequence spans 377 residues: tRNA(Met) cytidine acetate ligase (377 aa).

ATP is bound by residues 7–20 (VTEY…HLYH), G100, N153, and R178.

The protein belongs to the TmcAL family.

It is found in the cytoplasm. It carries out the reaction cytidine(34) in elongator tRNA(Met) + acetate + ATP = N(4)-acetylcytidine(34) in elongator tRNA(Met) + AMP + diphosphate. Functionally, catalyzes the formation of N(4)-acetylcytidine (ac(4)C) at the wobble position of elongator tRNA(Met), using acetate and ATP as substrates. First activates an acetate ion to form acetyladenylate (Ac-AMP) and then transfers the acetyl group to tRNA to form ac(4)C34. This Staphylococcus saprophyticus subsp. saprophyticus (strain ATCC 15305 / DSM 20229 / NCIMB 8711 / NCTC 7292 / S-41) protein is tRNA(Met) cytidine acetate ligase.